The sequence spans 236 residues: 7-cyano-7-deazaguanine synthase (236 aa).

ATP is bound at residue 7-17; that stretch reads CSGGLDSVSLA. The Zn(2+) site is built by cysteine 185, cysteine 193, cysteine 196, and cysteine 199.

The protein belongs to the QueC family. It depends on Zn(2+) as a cofactor.

The enzyme catalyses 7-carboxy-7-deazaguanine + NH4(+) + ATP = 7-cyano-7-deazaguanine + ADP + phosphate + H2O + H(+). Its pathway is purine metabolism; 7-cyano-7-deazaguanine biosynthesis. Catalyzes the ATP-dependent conversion of 7-carboxy-7-deazaguanine (CDG) to 7-cyano-7-deazaguanine (preQ(0)). In Rhizobium leguminosarum bv. trifolii (strain WSM2304), this protein is 7-cyano-7-deazaguanine synthase.